Here is a 398-residue protein sequence, read N- to C-terminus: 2,3,4,5-tetrahydropyridine-2,6-dicarboxylate N-succinyltransferase (398 aa).

The active-site Acyl-anhydride intermediate is Glu-268. Succinyl-CoA is bound by residues Arg-270, Gly-285, Ser-288, Ala-311, 326–327, Gly-334, Lys-361, and 374–377; these read DG and RQNS.

It belongs to the type 2 tetrahydrodipicolinate N-succinyltransferase family. As to quaternary structure, homotrimer.

The protein resides in the cytoplasm. It catalyses the reaction (S)-2,3,4,5-tetrahydrodipicolinate + succinyl-CoA + H2O = (S)-2-succinylamino-6-oxoheptanedioate + CoA. The protein operates within amino-acid biosynthesis; L-lysine biosynthesis via DAP pathway; LL-2,6-diaminopimelate from (S)-tetrahydrodipicolinate (succinylase route): step 1/3. In terms of biological role, catalyzes the conversion of the cyclic tetrahydrodipicolinate (THDP) into the acyclic N-succinyl-L-2-amino-6-oxopimelate using succinyl-CoA. The sequence is that of 2,3,4,5-tetrahydropyridine-2,6-dicarboxylate N-succinyltransferase from Sulfurimonas denitrificans (strain ATCC 33889 / DSM 1251) (Thiomicrospira denitrificans (strain ATCC 33889 / DSM 1251)).